The sequence spans 503 residues: 2-phosphoxylose phosphatase 1 (503 aa).

Residues 1–6 are Cytoplasmic-facing; the sequence is MLARSR. The helical; Signal-anchor for type II membrane protein transmembrane segment at 7–27 threads the bilayer; that stretch reads FILVLVVGALLAVLSFSLQYL. Residues 28–503 lie on the Lumenal side of the membrane; sequence HLIPTNPVAE…YQQACHQTVL (476 aa). Positions 38–63 are disordered; it reads QRSAGRSRKRVNPVLHTDPPAPDPIR. An N-linked (GlcNAc...) asparagine glycan is attached at N73. The Nucleophile role is filled by H98. The N-linked (GlcNAc...) asparagine glycan is linked to N365. D396 functions as the Proton donor in the catalytic mechanism. N-linked (GlcNAc...) asparagine glycosylation occurs at N490.

It belongs to the histidine acid phosphatase family.

The protein resides in the golgi apparatus membrane. The enzyme catalyses 3-O-[beta-D-GlcA-(1-&gt;3)-beta-D-Gal-(1-&gt;3)-beta-D-Gal-(1-&gt;4)-beta-D-2-O-P-Xyl]-L-seryl-[protein] + H2O = 3-O-(beta-D-GlcA-(1-&gt;3)-beta-D-Gal-(1-&gt;3)-beta-D-Gal-(1-&gt;4)-beta-D-Xyl)-L-seryl-[protein] + phosphate. Its function is as follows. Responsible for the 2-O-dephosphorylation of xylose in the glycosaminoglycan-protein linkage region of proteoglycans thereby regulating the amount of mature glycosaminoglycan (GAG) chains. Sulfated glycosaminoglycans (GAGs), including heparan sulfate and chondroitin sulfate, are synthesized on the so-called common GAG-protein linkage region (GlcUAbeta1-3Galbeta1-3Galbeta1-4Xylbeta1-O-Ser) of core proteins, which is formed by the stepwise addition of monosaccharide residues by the respective specific glycosyltransferases. In Danio rerio (Zebrafish), this protein is 2-phosphoxylose phosphatase 1.